Consider the following 507-residue polypeptide: Glutamyl-tRNA(Gln) amidotransferase subunit A, mitochondrial (507 aa).

Catalysis depends on charge relay system residues K79 and S160. S184 serves as the catalytic Acyl-ester intermediate.

Belongs to the amidase family. GatA subfamily. As to quaternary structure, subunit of the heterotrimeric GatCAB amidotransferase (AdT) complex, composed of A, B and C subunits.

The protein localises to the mitochondrion. The enzyme catalyses L-glutamyl-tRNA(Gln) + L-glutamine + ATP + H2O = L-glutaminyl-tRNA(Gln) + L-glutamate + ADP + phosphate + H(+). Functionally, allows the formation of correctly charged Gln-tRNA(Gln) through the transamidation of misacylated Glu-tRNA(Gln) in the mitochondria. The reaction takes place in the presence of glutamine and ATP through an activated gamma-phospho-Glu-tRNA(Gln). The sequence is that of Glutamyl-tRNA(Gln) amidotransferase subunit A, mitochondrial from Drosophila pseudoobscura pseudoobscura (Fruit fly).